The sequence spans 274 residues: 2,3,4,5-tetrahydropyridine-2,6-dicarboxylate N-succinyltransferase (274 aa).

Substrate-binding residues include Arg-104 and Asp-141.

Belongs to the transferase hexapeptide repeat family. Homotrimer.

Its subcellular location is the cytoplasm. The enzyme catalyses (S)-2,3,4,5-tetrahydrodipicolinate + succinyl-CoA + H2O = (S)-2-succinylamino-6-oxoheptanedioate + CoA. The protein operates within amino-acid biosynthesis; L-lysine biosynthesis via DAP pathway; LL-2,6-diaminopimelate from (S)-tetrahydrodipicolinate (succinylase route): step 1/3. In Yersinia enterocolitica serotype O:8 / biotype 1B (strain NCTC 13174 / 8081), this protein is 2,3,4,5-tetrahydropyridine-2,6-dicarboxylate N-succinyltransferase.